An 806-amino-acid chain; its full sequence is MDPNNKVSINKNMGLLRKCLCHDEYNKKRFCYSRFHHKTLLYKQLYEISKILRRLNSGLDMWCLRDAIISALGAMHDAPHVDRLLGQFYLKTNSASEFDSISLILESENILQKELIEFVRDSKVELEKILQAAIHVWRAKFSPGVLAASRFLDEISNSFNGIEENIPTIFLRISVTLASQIKKIEYLQKSFVSHKCPLVEEILILLYKRVCMLPFPCMSNLGLVSEKKSVFDTVFHNVSNFSLEDFLDINSGFFLPAMLNGSYVSVNLTRYHYEAESLMELLLSQLQIVEKDTNKTTGLTIYLEIWHLSLLMWLDFCEILPTTVQVKFCLILPEIFMERLKTENSYWSVFHKALAINLGLYDESDFTSKYLECERTAEHARIKTETLLDNICRCLRRGQMGFIFRKNIHKYSMLPQIASYCLGNSMDVIPFEYGLNTAFRIALNLSYFVENVSEEQKSHTNIDMFHYRDKIFNLKKMRKTVTELVLIGNAVIDYALENRDFLMDGIVNARSLAICVTGLHSALMSMNLPFNSQLGCQLYRIVCENIYYSSVRTSMNCCKKGAEPCSFFQRSKYAQGILHCDLYDNVEYTLPNVLWTNLRSDIKKYGLRNLTFVSGSAMSKEFDLLNCSQSFCPIEGNKILKRSSIKVLHPNPVFHSDLSVYSTELQTLYIPVYNGLFLNRFKNHLEYLSSVNYDVSKVNKNLFSEEEMQEMTIFLNAFDYSVNEMLNMYVGALPFTDHGQANVFFINKTENMRDILVCLYQNGFKTGIYQAVYKNQKCDGVNPSKKFDLLSGFSDGVVMSTMHVFQ.

Belongs to the ribonucleoside diphosphate reductase large chain family.

The protein resides in the virion. It localises to the host cytoplasm. Functionally, does not possess a ribonucleotide reductase activity. Betaherpesviruses probably use another strategy to expand the dNTP pool in a quiescent host cell. In Human herpesvirus 7 (strain JI) (HHV-7), this protein is Ribonucleoside-diphosphate reductase large subunit-like protein.